Reading from the N-terminus, the 575-residue chain is Preterminal protein (575 aa).

Positions 309–318 (RLPRVTRRRR) match the Nuclear localization signal motif. A disordered region spans residues 314–340 (TRRRRRPPSPAPPPEEIEEAAMEVEEP). Positions 328-340 (EEIEEAAMEVEEP) are enriched in acidic residues. The residue at position 510 (Ser510) is an O-(5'-phospho-DNA)-serine.

The protein belongs to the adenoviridae terminal protein family. Heterodimer with the polymerase; this heterodimer binds to bp 9 to 18 of the genome. Interacts with host POU2F1; POU2F1 binds to the auxiliary sequences in the inverted terminal repeats and tethers the pTP-POL heterodimer to the origin DNA thereby participating in the assembly of the pre-initiation complex (POL-TP-DBP-NFIA-POU2F1). In terms of processing, preterminal protein is used to replicate viral genome, upon genomic encapsidation it is processed first into iTP and finally into TP by adenovirus protease.

It is found in the host nucleus matrix. Protein covalently bound to the viral DNA that acts as a primer for viral genomic replication by DNA strand displacement. Assembles on the viral origin of replication in an initiation complex with viral polymerase, DBP, host NFIA and host POU2F1/OCT1. During initiation, the polymerase covalently couples the first dCTP with Ser-580 of pTP. The terminal protein stimulates the template activity over 20 fold compared to protein-free templates. Neo-synthesized viral genomes are linked to two preterminal proteins, one for each 5' end. These new genomes are encapsidated in the nucleus, and during capsid maturation by viral protease, preterminal protein is first cleaved into intermediary (iTP), then into mature TP. May play a role in host nuclear matrix localization of genomic DNA. This chain is Preterminal protein, found in Fowl adenovirus A serotype 1 (strain CELO / Phelps) (FAdV-1).